The chain runs to 214 residues: Reticulon-3-A (214 aa).

The disordered stretch occupies residues 1 to 21; that stretch reads MAETSGPQSSHISSSSVGEKG. One can recognise a Reticulon domain in the interval 26-214; that stretch reads VRDLLYWRDV…LPGALKKKSE (189 aa). 2 helical membrane-spanning segments follow: residues 46-66 and 155-175; these read MVLLLSLAAFSIISVISYLVL and VFNGITLLILGVLLTFTAPIV.

Homodimer. In terms of tissue distribution, expressed in the animal hemisphere at the four-cell stage. During gastrulation, expression becomes restricted to the prospective neuroectoderm. At the early tail bud stage, expressed in the head structure. At the tadpole stage, expressed in head and neural tissues including the otic vesicle and optic nerve.

It is found in the endoplasmic reticulum membrane. Its subcellular location is the golgi apparatus membrane. Its function is as follows. May be involved in membrane trafficking in the early secretory pathway. This chain is Reticulon-3-A (rtn3-a), found in Xenopus laevis (African clawed frog).